The following is a 374-amino-acid chain: Chaperone protein DnaJ (374 aa).

One can recognise a J domain in the interval 5–70; it reads DFYEILGVGK…QKRDAYDRYG (66 aa). The segment at 29–50 is disordered; that stretch reads AMKHHPDRNPDSKGAEDKFKEA. Positions 35–50 are enriched in basic and acidic residues; that stretch reads DRNPDSKGAEDKFKEA. Residues 134–212 form a CR-type zinc finger; that stretch reads GYDTTIRVPS…CSGAGKIKRN (79 aa). Positions 147, 150, 164, 167, 186, 189, 200, and 203 each coordinate Zn(2+). CXXCXGXG motif repeat units follow at residues 147–154, 164–171, 186–193, and 200–207; these read CETCDGSG, CTTCGGHG, CPKCHGSG, and CGTCSGAG.

This sequence belongs to the DnaJ family. Homodimer. It depends on Zn(2+) as a cofactor.

Its subcellular location is the cytoplasm. Participates actively in the response to hyperosmotic and heat shock by preventing the aggregation of stress-denatured proteins and by disaggregating proteins, also in an autonomous, DnaK-independent fashion. Unfolded proteins bind initially to DnaJ; upon interaction with the DnaJ-bound protein, DnaK hydrolyzes its bound ATP, resulting in the formation of a stable complex. GrpE releases ADP from DnaK; ATP binding to DnaK triggers the release of the substrate protein, thus completing the reaction cycle. Several rounds of ATP-dependent interactions between DnaJ, DnaK and GrpE are required for fully efficient folding. Also involved, together with DnaK and GrpE, in the DNA replication of plasmids through activation of initiation proteins. In Janthinobacterium sp. (strain Marseille) (Minibacterium massiliensis), this protein is Chaperone protein DnaJ.